A 175-amino-acid polypeptide reads, in one-letter code: Alkyl hydroperoxide reductase AhpD (175 aa).

Cysteine 131 functions as the Proton donor in the catalytic mechanism. A disulfide bond links cysteine 131 and cysteine 134. Catalysis depends on cysteine 134, which acts as the Cysteine sulfenic acid (-SOH) intermediate.

It belongs to the AhpD family.

It catalyses the reaction N(6)-[(R)-dihydrolipoyl]-L-lysyl-[lipoyl-carrier protein] + a hydroperoxide = N(6)-[(R)-lipoyl]-L-lysyl-[lipoyl-carrier protein] + an alcohol + H2O. In terms of biological role, antioxidant protein with alkyl hydroperoxidase activity. Required for the reduction of the AhpC active site cysteine residues and for the regeneration of the AhpC enzyme activity. This chain is Alkyl hydroperoxide reductase AhpD, found in Brucella canis (strain ATCC 23365 / NCTC 10854 / RM-666).